Reading from the N-terminus, the 699-residue chain is Cysteine--tRNA ligase (699 aa).

The tract at residues 1–226 (MTTITEKRLT…SEQQRLIHNP (226 aa)) is unknown. Residue Cys-254 participates in Zn(2+) binding. Positions 256–266 (MTVYDYCHLGH) match the 'HIGH' region motif. Cys-435, His-460, and Glu-464 together coordinate Zn(2+). Residues 508 to 512 (KMSKS) carry the 'KMSKS' region motif. Lys-511 is a binding site for ATP.

It belongs to the class-I aminoacyl-tRNA synthetase family. As to quaternary structure, monomer. Requires Zn(2+) as cofactor.

The protein resides in the cytoplasm. The catalysed reaction is tRNA(Cys) + L-cysteine + ATP = L-cysteinyl-tRNA(Cys) + AMP + diphosphate. The chain is Cysteine--tRNA ligase (cysS) from Neisseria meningitidis serogroup A / serotype 4A (strain DSM 15465 / Z2491).